A 1363-amino-acid chain; its full sequence is Homeobox protein 13 (1363 aa).

The stretch at 15–73 (FVMEQIQQQQQQQQQQQQQQQQQQQQQQQQQQQQLQQQQQQQQQQQQQQQQQQQQQQQN) forms a coiled coil. Disordered regions lie at residues 66 to 96 (QQQQQQQNPKMNNQPNETRLPSPPLLNSTVP), 120 to 177 (SQHA…INGS), 308 to 437 (INGT…YHGG), 621 to 731 (LNSP…QHQQ), 765 to 818 (HHHH…PQHS), 857 to 911 (SINS…SNSI), 1001 to 1137 (QNYN…TLIN), 1166 to 1202 (NFINNNSNNNNNMEIDDDDEDGIDGIEGEDDSKKRMR), and 1270 to 1341 (ISFG…TLIS). Over residues 73–96 (NPKMNNQPNETRLPSPPLLNSTVP) the composition is skewed to polar residues. Residues 132-147 (SLNSSNNNNNNNFNNS) show a composition bias toward low complexity. Over residues 148-158 (RPTFSSCSGNS) the composition is skewed to polar residues. 2 stretches are compositionally biased toward low complexity: residues 159–177 (NNTTTTTTTTTTTNPINGS) and 315–326 (SNHSNNNNNNNN). Basic residues predominate over residues 327–339 (NHHHHHHHHHQKR). Over residues 348-378 (TNHLTPLPLLHKHTNNNNNINNNNNHNHNNI) the composition is skewed to low complexity. A compositionally biased stretch (polar residues) spans 379 to 393 (LGSPNQLNRSQDFTS). Composition is skewed to low complexity over residues 394 to 408 (KNNNINNNNNNNNKI), 415 to 426 (NKGSPNQNSSEN), 641 to 693 (NNNS…NNNI), 709 to 731 (HHQQQLQHQQHQQQQLLHQQHQQ), and 770 to 793 (QQQQQQQQQQQHNNNNNNNNSNHN). Residues 738–789 (QQQLQIQYQQQQTHNNNLNQTQQLYYNHHHHQQQQQQQQQQQQHNNNNNNNN) adopt a coiled-coil conformation. 2 stretches are compositionally biased toward polar residues: residues 794–818 (SVLTSPPLSQFPKTPLQLSQTPQHS) and 857–883 (SINSNSGMSLPMISSPSPNLSHMQKNR). Composition is skewed to low complexity over residues 889 to 911 (ILNSSLSSSNTTNSATTSSSNSI), 1001 to 1031 (QNYNENNNNNNNNNNNNYNINNINNNNNNNF), and 1045 to 1063 (NINNNNNNNNNNNNNNNNN). The segment covering 1064-1078 (KNDKNESEFESKEKL) has biased composition (basic and acidic residues). The span at 1081-1095 (PFGSSIPNIVNNEQL) shows a compositional bias: polar residues. Low complexity-rich tracts occupy residues 1096–1116 (SPYSQQSLSSSSSENPSPQWS), 1123–1137 (TSSSKLSNSTSTLIN), and 1166–1177 (NFINNNSNNNNN). The span at 1179–1195 (EIDDDDEDGIDGIEGED) shows a compositional bias: acidic residues. The segment at residues 1198-1261 (KKRMRKTTRP…NRRTKDKLKN (64 aa)) is a DNA-binding region (homeobox). Low complexity predominate over residues 1275-1294 (SSTSSTQTSTNSPSSQLSPL). Polar residues predominate over residues 1297-1316 (NMNNNDQQSISTPSLILSQI). Over residues 1317–1334 (NNNQNNNQNNNNNNNTNN) the composition is skewed to low complexity.

Its subcellular location is the nucleus. Functionally, putative transcription factor. In Dictyostelium discoideum (Social amoeba), this protein is Homeobox protein 13 (hbx13).